We begin with the raw amino-acid sequence, 166 residues long: Myosin regulatory light chain 2, ventricular/cardiac muscle isoform (166 aa).

Serine 2 is subject to N,N,N-trimethylserine. Phosphoserine occurs at positions 14, 15, and 19. EF-hand domains are found at residues 24–59, 94–129, and 130–165; these read TQIQ…LGRV, DPEE…QAER, and FSKE…GEEK. Residues aspartate 37, asparagine 39, aspartate 41, and aspartate 48 each coordinate Ca(2+). At threonine 52 the chain carries Phosphothreonine.

As to quaternary structure, myosin is a hexamer of 2 heavy chains and 4 light chains. Interacts with MYOC. In terms of processing, N-terminus is methylated by METTL11A/NTM1. Phosphorylated by MYLK3 and MYLK2; promotes cardiac muscle contraction and function. Dephosphorylated by PPP1CB complexed to PPP1R12B. The phosphorylated form in adult is expressed as gradients across the heart from endocardium (low phosphorylation) to epicardium (high phosphorylation); regulates cardiac torsion and workload distribution. In terms of tissue distribution, abundantly expressed in both cardiac and slow skeletal muscle (soleus), with no detectable expression in fast skeletal muscle (vastus lateralis) or non-muscle tissue.

The protein localises to the cytoplasm. It is found in the myofibril. The protein resides in the sarcomere. It localises to the a band. Functionally, contractile protein that plays a role in heart development and function. Following phosphorylation, plays a role in cross-bridge cycling kinetics and cardiac muscle contraction by increasing myosin lever arm stiffness and promoting myosin head diffusion; as a consequence of the increase in maximum contraction force and calcium sensitivity of contraction force. These events altogether slow down myosin kinetics and prolong duty cycle resulting in accumulated myosins being cooperatively recruited to actin binding sites to sustain thin filament activation as a means to fine-tune myofilament calcium sensitivity to force. During cardiogenesis plays an early role in cardiac contractility by promoting cardiac myofibril assembly. The sequence is that of Myosin regulatory light chain 2, ventricular/cardiac muscle isoform from Rattus norvegicus (Rat).